Consider the following 300-residue polypeptide: Lysophosphatidic acid:oleoyl-CoA acyltransferase 1 (300 aa).

Residues 33–53 (LLGILGVKTIIMLPLIMLYLL) traverse the membrane as a helical segment. The short motif at 101-106 (CTSPLD) is the HXXXXD motif element.

It belongs to the 1-acyl-sn-glycerol-3-phosphate acyltransferase family.

It is found in the lipid droplet. Its subcellular location is the endoplasmic reticulum membrane. The catalysed reaction is a 1-acyl-sn-glycero-3-phosphate + an acyl-CoA = a 1,2-diacyl-sn-glycero-3-phosphate + CoA. It carries out the reaction 1-hexadecanoyl-sn-glycero-3-phosphate + (9Z)-octadecenoyl-CoA = 1-hexadecanoyl-2-(9Z-octadecenoyl)-sn-glycero-3-phosphate + CoA. In terms of biological role, acyl-CoA-dependent lysophosphatidic acid acyltransferase with preference for oleoyl-CoA. Involved in triacylglyceride homeostasis and lipid droplet formation. Involved in vacuolar protein sorting. The polypeptide is Lysophosphatidic acid:oleoyl-CoA acyltransferase 1 (Saccharomyces cerevisiae (strain ATCC 204508 / S288c) (Baker's yeast)).